The chain runs to 180 residues: Probable galaptin lec-8 (180 aa).

The region spanning 11–138 (SAHAIREQLR…AAHIDEISFS (128 aa)) is the Galectin domain.

The chain is Probable galaptin lec-8 (lec-8) from Caenorhabditis elegans.